A 149-amino-acid polypeptide reads, in one-letter code: MQVILLDKIVHLGQVGDQVNVKSGFARNFLIPQGKAVMATKANIEHFEARRAELEATAAANLAAAQARAAEVTALGSVTIASKAGDEGRLFGAITTRDVAEAVTAAGVKIAKSEVRLPNGPIRTLGDHDVRFQLHGEVFAALDVIVVAE.

It belongs to the bacterial ribosomal protein bL9 family.

Functionally, binds to the 23S rRNA. This is Large ribosomal subunit protein bL9 from Haemophilus influenzae (strain PittEE).